The sequence spans 380 residues: Kappa-type opioid receptor (380 aa).

At 1–57 the chain is on the extracellular side; sequence MDSPIQIFRGEPGPTCAPSACLPPNSSAWFPGWAEPDSNGSAGSEDAQLEPAHISPA. N-linked (GlcNAc...) asparagine glycans are attached at residues Asn-25 and Asn-39. The chain crosses the membrane as a helical span at residues 58–85; the sequence is IPVIITAVYSVVFVVGLVGNSLVMFVII. Over 86-95 the chain is Cytoplasmic; it reads RYTKMKTATN. A helical membrane pass occupies residues 96-119; sequence IYIFNLALADALVTTTMPFQSTVY. Over 120–132 the chain is Extracellular; the sequence is LMNSWPFGDVLCK. Cys-131 and Cys-210 are joined by a disulfide. The helical transmembrane segment at 133–154 threads the bilayer; the sequence is IVISIDYYNMFTSIFTLTMMSV. At 155 to 173 the chain is on the cytoplasmic side; it reads DRYIAVCHPVKALDFRTPL. Residues 174–196 form a helical membrane-spanning segment; that stretch reads KAKIINICIWLLSSSVGISAIVL. The Extracellular portion of the chain corresponds to 197 to 222; that stretch reads GGTKVREDVDVIECSLQFPDDDYSWW. Residues 223–247 form a helical membrane-spanning segment; sequence DLFMKICVFIFAFVIPVLIIIVCYT. Residues 248-274 are Cytoplasmic-facing; sequence LMILRLKSVRLLSGSREKDRNLRRITR. Residues 275-296 traverse the membrane as a helical segment; sequence LVLVVVAVFVVCWTPIHIFILV. The Extracellular portion of the chain corresponds to 297–311; that stretch reads EALGSTSHSTAALSS. A helical transmembrane segment spans residues 312-333; that stretch reads YYFCIALGYTNSSLNPILYAFL. The Cytoplasmic portion of the chain corresponds to 334–380; that stretch reads DENFKRCFRDFCFPLKMRMERQSTSRVRNTVQDPAYLRDIDGMNKPV. Cys-345 carries the S-palmitoyl cysteine lipid modification.

The protein belongs to the G-protein coupled receptor 1 family. Interacts with NHERF1. Interacts with GABARAPL1. Detected in brain and placenta.

Its subcellular location is the cell membrane. G-protein coupled opioid receptor that functions as a receptor for endogenous alpha-neoendorphins and dynorphins, but has low affinity for beta-endorphins. Also functions as a receptor for various synthetic opioids and for the psychoactive diterpene salvinorin A. Ligand binding causes a conformation change that triggers signaling via guanine nucleotide-binding proteins (G proteins) and modulates the activity of down-stream effectors, such as adenylate cyclase. Signaling leads to the inhibition of adenylate cyclase activity. Inhibits neurotransmitter release by reducing calcium ion currents and increasing potassium ion conductance. Plays a role in the perception of pain. Plays a role in mediating reduced physical activity upon treatment with synthetic opioids. Plays a role in the regulation of salivation in response to synthetic opioids. May play a role in arousal and regulation of autonomic and neuroendocrine functions. The chain is Kappa-type opioid receptor (OPRK1) from Homo sapiens (Human).